Here is a 182-residue protein sequence, read N- to C-terminus: Biotin carboxyl carrier protein of acetyl-CoA carboxylase (182 aa).

Positions 70–95 are disordered; sequence AAPSPSPEPGTSRAADHAVTSSGSQP. The region spanning 104-180 is the Biotinyl-binding domain; sequence LAEVASPMVG…EYNQPLMRIK (77 aa). Lys-146 is modified (N6-biotinyllysine).

Homodimer.

The protein operates within lipid metabolism; fatty acid biosynthesis. Functionally, this protein is a component of the acetyl coenzyme A carboxylase complex; first, biotin carboxylase catalyzes the carboxylation of the carrier protein and then the transcarboxylase transfers the carboxyl group to form malonyl-CoA. The protein is Biotin carboxyl carrier protein of acetyl-CoA carboxylase (accB) of Nostoc sp. (strain PCC 7120 / SAG 25.82 / UTEX 2576).